The following is a 619-amino-acid chain: ETS-related transcription factor Elf-1 (619 aa).

A phosphoserine mark is found at S110, S163, S167, and S168. The interval 158–199 (EKYADSPGASSPEQPKRKKGRKTKPPRPDSPATTPNISVKKK) is disordered. Basic residues predominate over residues 173–182 (KRKKGRKTKP). Phosphoserine is present on S187. T190 carries the post-translational modification Phosphothreonine. Positions 208-290 (IYLWEFLLAL…EGQRLVYQFK (83 aa)) form a DNA-binding region, ETS. The interval 300-366 (NDEDPSSSIE…DPVEVAQPSE (67 aa)) is disordered. A compositionally biased stretch (low complexity) spans 305–321 (SSSIESSDPSLSSSATS). A compositionally biased stretch (polar residues) spans 322-335 (NRNQTSRSRVSSSP). At S432 the chain carries Phosphoserine. The interval 564 to 592 (TLTQEVEKKESEDHLKENTEKTEQQPQPY) is disordered. Basic and acidic residues predominate over residues 568 to 586 (EVEKKESEDHLKENTEKTE).

This sequence belongs to the ETS family. In terms of assembly, binds to the underphosphorylated form of RB. May interact with other transcription factors in order to regulate specific genes. Interacts with RUNX1. As to expression, in fetal tissues, it is highly expressed in heart, lung liver and kidney, and weakly expressed in brain. In adult, it is highly expressed in pancreas, spleen, thymus and peripheral blood leukocytes, expressed at moderate levels in heart, placenta, lung, liver, skeletal muscle, kidney, prostate, ovary, small intestine and colon, and weakly expressed in brain and testis.

It is found in the nucleus. Transcription factor that activates the LYN and BLK promoters. Appears to be required for the T-cell-receptor-mediated trans activation of HIV-2 gene expression. Binds specifically to two purine-rich motifs in the HIV-2 enhancer. The protein is ETS-related transcription factor Elf-1 (ELF1) of Homo sapiens (Human).